Reading from the N-terminus, the 414-residue chain is 2,3-bisphosphoglycerate-independent phosphoglycerate mutase (414 aa).

The protein belongs to the BPG-independent phosphoglycerate mutase family. A-PGAM subfamily.

The enzyme catalyses (2R)-2-phosphoglycerate = (2R)-3-phosphoglycerate. It functions in the pathway carbohydrate degradation; glycolysis; pyruvate from D-glyceraldehyde 3-phosphate: step 3/5. Catalyzes the interconversion of 2-phosphoglycerate and 3-phosphoglycerate. This is 2,3-bisphosphoglycerate-independent phosphoglycerate mutase from Saccharolobus islandicus (strain M.14.25 / Kamchatka #1) (Sulfolobus islandicus).